We begin with the raw amino-acid sequence, 89 residues long: Small ribosomal subunit protein uS15 (89 aa).

It belongs to the universal ribosomal protein uS15 family. As to quaternary structure, part of the 30S ribosomal subunit. Forms a bridge to the 50S subunit in the 70S ribosome, contacting the 23S rRNA.

One of the primary rRNA binding proteins, it binds directly to 16S rRNA where it helps nucleate assembly of the platform of the 30S subunit by binding and bridging several RNA helices of the 16S rRNA. In terms of biological role, forms an intersubunit bridge (bridge B4) with the 23S rRNA of the 50S subunit in the ribosome. This Chloroflexus aurantiacus (strain ATCC 29366 / DSM 635 / J-10-fl) protein is Small ribosomal subunit protein uS15.